A 228-amino-acid polypeptide reads, in one-letter code: Sodium channel regulatory subunit beta-4 (228 aa).

A signal peptide spans 1–30; that stretch reads MSRAGNRGNTQARWLGIGLLGLFLLPMYLS. An Ig-like C2-type domain is found at 31-148; sequence LEVSVGKATT…KDLNNSATIF (118 aa). The Extracellular segment spans residues 31–161; that stretch reads LEVSVGKATT…VDKLEEVDNT (131 aa). N45, N71, N113, and N142 each carry an N-linked (GlcNAc...) asparagine glycan. Cysteines 53 and 131 form a disulfide. A helical membrane pass occupies residues 162-182; the sequence is VTLIILAVVGGVIGLLVCILL. Topologically, residues 183 to 228 are cytoplasmic; that stretch reads LKKLITFILKKTREKKKECLVSSSGNDNTENGLPGSKAEEKPPTKV. The tract at residues 199–228 is disordered; sequence KECLVSSSGNDNTENGLPGSKAEEKPPTKV. Positions 203–213 are enriched in polar residues; that stretch reads VSSSGNDNTEN. The segment covering 219–228 has biased composition (basic and acidic residues); sequence KAEEKPPTKV.

Belongs to the sodium channel auxiliary subunit SCN4B (TC 8.A.17) family. As to quaternary structure, a voltage-gated sodium (Nav) channel consists of an ion-conducting pore-forming alpha subunit functional on its own that is regulated by one or more beta subunits. The beta subunit SCN4B is disulfide-linked to the pore-forming alpha subunit. Interacts with SCN1A; regulatory subunit of SCN1A/Nav1.1. Interacts with SCN2A; regulatory subunit of SCN2A/Nav1.2. Contains an interchain disulfide bond with SCN2A. In terms of tissue distribution, expressed at a high level in dorsal root ganglia, at a lower level in brain, spinal cord, skeletal muscle and heart.

The protein localises to the cell membrane. Its function is as follows. Regulatory subunit of multiple voltage-gated sodium (Nav) channels directly mediating the depolarization of excitable membranes. Navs, also called VGSCs (voltage-gated sodium channels) or VDSCs (voltage-dependent sodium channels), operate by switching between closed and open conformations depending on the voltage difference across the membrane. In the open conformation they allow Na(+) ions to selectively pass through the pore, along their electrochemical gradient. The influx of Na+ ions provokes membrane depolarization, initiating the propagation of electrical signals throughout cells and tissues. The accessory beta subunits participate in localization and functional modulation of the Nav channels. Modulates the activity of SCN1A/Nav1.1. Modulates the activity of SCN2A/Nav1.2. This Rattus norvegicus (Rat) protein is Sodium channel regulatory subunit beta-4.